The following is a 66-amino-acid chain: Gas vesicle protein A (66 aa).

This sequence belongs to the gas vesicle GvpA family. In terms of assembly, the gas vesicle shell is 2 nm thick and consists of a single layer of this protein. It forms helical ribs nearly perpendicular to the long axis of the vesicle.

It is found in the gas vesicle shell. In terms of biological role, gas vesicles are hollow, gas filled proteinaceous nanostructures found in some microorganisms. During planktonic growth they allow positioning of the organism at a favorable depth for light or nutrient acquisition. GvpA forms the protein shell. The polypeptide is Gas vesicle protein A (Thiocapsa pendens (Amoebobacter pendens)).